Reading from the N-terminus, the 430-residue chain is Asparagine--tRNA ligase (430 aa).

The protein belongs to the class-II aminoacyl-tRNA synthetase family. As to quaternary structure, homodimer.

The protein resides in the cytoplasm. It carries out the reaction tRNA(Asn) + L-asparagine + ATP = L-asparaginyl-tRNA(Asn) + AMP + diphosphate + H(+). The chain is Asparagine--tRNA ligase from Staphylococcus aureus (strain MW2).